The sequence spans 418 residues: Thyroid hormone receptor alpha (418 aa).

The tract at residues M1–S41 is disordered. Residues M1–P60 form a modulating region. The Zn(2+) site is built by C61, C64, C78, C81, C99, C105, C115, and C118. NR C4-type zinc fingers lie at residues C61 to C81 and C99 to C123. A DNA-binding region (nuclear receptor) is located at residues C61 to D135. Positions E171 to D415 constitute an NR LBD domain. 2 residues coordinate 3,3',5-triiodo-L-thyronine: R236 and S285.

This sequence belongs to the nuclear hormone receptor family. NR1 subfamily. In terms of tissue distribution, highest level of expression in erythrocytes. Also expressed in liver, tail, eye, muscle and skin.

It is found in the nucleus. Nuclear hormone receptor that can act as a repressor or activator of transcription. High affinity receptor for thyroid hormones, including triiodothyronine and thyroxine. This Aquarana catesbeiana (American bullfrog) protein is Thyroid hormone receptor alpha (thra).